Here is a 185-residue protein sequence, read N- to C-terminus: Hypoxanthine/guanine phosphoribosyltransferase (185 aa).

This sequence belongs to the purine/pyrimidine phosphoribosyltransferase family. Archaeal HPRT subfamily. Homodimer.

Its subcellular location is the cytoplasm. It carries out the reaction IMP + diphosphate = hypoxanthine + 5-phospho-alpha-D-ribose 1-diphosphate. The enzyme catalyses GMP + diphosphate = guanine + 5-phospho-alpha-D-ribose 1-diphosphate. It functions in the pathway purine metabolism; IMP biosynthesis via salvage pathway; IMP from hypoxanthine: step 1/1. In terms of biological role, catalyzes a salvage reaction resulting in the formation of IMP that is energically less costly than de novo synthesis. This Aciduliprofundum boonei (strain DSM 19572 / T469) protein is Hypoxanthine/guanine phosphoribosyltransferase.